Consider the following 369-residue polypeptide: Protein DUF642 L-GALACTONO-1,4-LACTONE-RESPONSIVE GENE 2 (369 aa).

Residues 1-19 form the signal peptide; the sequence is MEGVTVVSFFLLFIATAMA. Residue N125 is glycosylated (N-linked (GlcNAc...) asparagine).

Expressed in roots, seedlings and leaves.

The protein resides in the secreted. It localises to the cell wall. In terms of biological role, involved in the regulation of testa rupture during seed germination. Required during roots and rosettes development. This Arabidopsis thaliana (Mouse-ear cress) protein is Protein DUF642 L-GALACTONO-1,4-LACTONE-RESPONSIVE GENE 2.